Here is a 313-residue protein sequence, read N- to C-terminus: uncharacterized protein (313 aa).

The next 3 helical transmembrane spans lie at 19 to 41 (GLAVAIALITAIAWFPDGLAGFL), 51 to 68 (AIIGAILTILGLSIIFFL), and 81 to 103 (IAEFGFIVLTLIFSLIVFNDFAI).

It is found in the cell membrane. This is an uncharacterized protein from Aquifex aeolicus (strain VF5).